The sequence spans 650 residues: Serine/threonine-protein phosphatase with EF-hands 1 (650 aa).

The 30-residue stretch at 16–45 (VIKAALVIQNWYRRYRARLRVRQHYALAIF) folds into the IQ domain. The tract at residues 124-456 (IHILLQAFKQ…PQFFQYQVTS (333 aa)) is catalytic. Residues Asp-175, His-177, Asp-204, and Asn-236 each coordinate Mn(2+). His-237 (proton donor) is an active-site residue. His-288 lines the Mn(2+) pocket. Residues 315–348 (PVLGNQETGEKRNKSASNYVEPRKVEPDKTPSED) form a disordered region. Residues 335–348 (EPRKVEPDKTPSED) are compositionally biased toward basic and acidic residues. A Mn(2+)-binding site is contributed by His-404. EF-hand domains follow at residues 484-519 (SRKT…ILGL), 567-602 (RYRS…FNAH), and 607-642 (IDDS…VHKY). 14 residues coordinate Ca(2+): Asp-497, Ser-499, Ser-501, Arg-503, Glu-508, Asp-580, Asp-582, Ser-584, Glu-591, Asp-620, Asn-622, Asp-624, Asn-626, and Glu-631.

It belongs to the PPP phosphatase family. Mn(2+) serves as cofactor. It depends on Mg(2+) as a cofactor. As to expression, in the embryo it is almost exclusively expressed in the peripheral nervous system, within sensory neurons of cranial and dorsal root ganglia. Otherwise found in fetal inner ear and a small group of neurons in the midbrain/pons junction.

It carries out the reaction O-phospho-L-seryl-[protein] + H2O = L-seryl-[protein] + phosphate. The catalysed reaction is O-phospho-L-threonyl-[protein] + H2O = L-threonyl-[protein] + phosphate. Its activity is regulated as follows. Activated by calcium. Its function is as follows. May have a role in the recovery or adaptation response of photoreceptors. May have a role in diverse sensory neurons and in development. The chain is Serine/threonine-protein phosphatase with EF-hands 1 (Ppef1) from Mus musculus (Mouse).